Consider the following 300-residue polypeptide: MNFQGLVLTDNCKNQWVVGPLIGKGGFGSIYTTNDNNYVVKIEPKANGSLFTEQAFYTRVLKPSVIEEWKKSHNIKHVGLITCKAFGLYKSINVEYRFLVINRLGADLDAVIRANNNRLPKRSVMLIGIEILNTIQFMHEQGYSHGDIKASNIVLDQIDKNKLYLVDYGLVSKFMSNGEHVPFIRNPNKMDNGTLEFTPIDSHKGYVVSRRGDLETLGYCMIRWLGGILPWTKISETKNCALVSATKQKYVNNTATLLMTSLQYAPRELLQYITMVNSLTYFEEPNYDKFRHILMQGVYY.

One can recognise a Protein kinase domain in the interval 16 to 282 (WVVGPLIGKG…ITMVNSLTYF (267 aa)). Residues 22–30 (IGKGGFGSI) and K45 each bind ATP. Catalysis depends on D147, which acts as the Proton acceptor.

The protein belongs to the protein kinase superfamily. Ser/Thr protein kinase family. Poxviruses subfamily. As to quaternary structure, interacts with host JIP1; this interaction increases the amount of MAPK bound to JIP1 and subsequently increases the activity of transcription factors, such as JUN, that respond to these complexes. Interacts with protein OPG198; this interaction inhibits the repressive activity of OPG198 pseudokinase on viral replication factory formation. The cofactor is Mg(2+). Autophosphorylated.

The protein localises to the virion. It localises to the host cytoplasm. The catalysed reaction is L-seryl-[protein] + ATP = O-phospho-L-seryl-[protein] + ADP + H(+). It catalyses the reaction L-threonyl-[protein] + ATP = O-phospho-L-threonyl-[protein] + ADP + H(+). Essential serine/threonine-protein kinase that plays different role in the viral life cycle. Phosphorylates the host small ribosomal protein RACK1 thereby customizing the ribosomes to a state optimal for viral mRNAs (which contain poly-A leaders) but not for host mRNAs. Facilitates viral DNA replication by inhibiting host BANF1, a cellular host defense responsive to foreign DNA. Phosphorylates host BANF1 on serine and threonine residues; this leads to BANF1 relocalization to the cytoplasm, loss of dimerization and impaired DNA binding activity. Indeed, BANF1 activity depends on its DNA-binding property which is blocked by VPK1-mediated phosphorylation. Required for viral intermediate genes expression, probably by inhibiting host BANF1. Modulates cellular responses via host JUN by two different mechanisms, either by direct phosphorylation or by modulation of upstream JIP1-MAPK complexes. Seems to participate in the accumulation/processing of late proteins and thus in virion maturation. In addition, inhibits B12 repressive activity on viral DNA replication via a phosphorylation-dependent mechanism. This is B1 kinase (OPG187) from Vaccinia virus (strain Ankara) (VACV).